The sequence spans 182 residues: uncharacterized protein (182 aa).

Residues Leu-36–Leu-164 enclose the Nudix hydrolase domain. A Nudix box motif is present at residues Gly-73–Gly-95. Positions 89 and 93 each coordinate Mg(2+).

The protein belongs to the Nudix hydrolase family. Mg(2+) is required as a cofactor.

This is an uncharacterized protein from Yersinia pestis.